Here is a 423-residue protein sequence, read N- to C-terminus: Serine hydroxymethyltransferase (423 aa).

119-121 is a binding site for (6S)-5,6,7,8-tetrahydrofolate; that stretch reads GHI. The residue at position 225 (Lys-225) is an N6-(pyridoxal phosphate)lysine.

Belongs to the SHMT family. In terms of assembly, homodimer. It depends on pyridoxal 5'-phosphate as a cofactor.

The protein localises to the cytoplasm. It carries out the reaction (6R)-5,10-methylene-5,6,7,8-tetrahydrofolate + glycine + H2O = (6S)-5,6,7,8-tetrahydrofolate + L-serine. It participates in one-carbon metabolism; tetrahydrofolate interconversion. The protein operates within amino-acid biosynthesis; glycine biosynthesis; glycine from L-serine: step 1/1. In terms of biological role, catalyzes the reversible interconversion of serine and glycine with tetrahydrofolate (THF) serving as the one-carbon carrier. Also exhibits THF-independent aldolase activity toward beta-hydroxyamino acids, producing glycine and aldehydes, via a retro-aldol mechanism. In Methanocella arvoryzae (strain DSM 22066 / NBRC 105507 / MRE50), this protein is Serine hydroxymethyltransferase.